The chain runs to 219 residues: Octanoyltransferase (219 aa).

Residues 31–206 form the BPL/LPL catalytic domain; sequence TASADEIWLV…ECLRLMKASA (176 aa). Residues 70–77, 137–139, and 150–152 contribute to the substrate site; these read RGGQVTFH, SLG, and GLA. Cysteine 168 (acyl-thioester intermediate) is an active-site residue.

Belongs to the LipB family.

It localises to the cytoplasm. The enzyme catalyses octanoyl-[ACP] + L-lysyl-[protein] = N(6)-octanoyl-L-lysyl-[protein] + holo-[ACP] + H(+). Its pathway is protein modification; protein lipoylation via endogenous pathway; protein N(6)-(lipoyl)lysine from octanoyl-[acyl-carrier-protein]: step 1/2. In terms of biological role, catalyzes the transfer of endogenously produced octanoic acid from octanoyl-acyl-carrier-protein onto the lipoyl domains of lipoate-dependent enzymes. Lipoyl-ACP can also act as a substrate although octanoyl-ACP is likely to be the physiological substrate. In Sodalis glossinidius (strain morsitans), this protein is Octanoyltransferase.